A 294-amino-acid polypeptide reads, in one-letter code: tRNA dimethylallyltransferase (294 aa).

10–17 (GPTAVGKT) is an ATP binding site. 12–17 (TAVGKT) is a substrate binding site. The segment at 35–38 (DSQQ) is interaction with substrate tRNA.

It belongs to the IPP transferase family. Monomer. Mg(2+) serves as cofactor.

The enzyme catalyses adenosine(37) in tRNA + dimethylallyl diphosphate = N(6)-dimethylallyladenosine(37) in tRNA + diphosphate. In terms of biological role, catalyzes the transfer of a dimethylallyl group onto the adenine at position 37 in tRNAs that read codons beginning with uridine, leading to the formation of N6-(dimethylallyl)adenosine (i(6)A). The protein is tRNA dimethylallyltransferase of Streptococcus pneumoniae serotype 2 (strain D39 / NCTC 7466).